We begin with the raw amino-acid sequence, 554 residues long: Phosphomannomutase (554 aa).

The Phosphoserine intermediate role is filled by serine 149. Positions 149, 301, 303, and 305 each coordinate Mg(2+).

Belongs to the phosphohexose mutase family. Mg(2+) is required as a cofactor.

The catalysed reaction is alpha-D-mannose 1-phosphate = D-mannose 6-phosphate. In Mycoplasma pneumoniae (strain ATCC 29342 / M129 / Subtype 1) (Mycoplasmoides pneumoniae), this protein is Phosphomannomutase (manB).